We begin with the raw amino-acid sequence, 904 residues long: Trichohyalin-like protein 1 (904 aa).

The EF-hand domain occupies 48 to 83 (CVLHAVEKNSNLLNIDSNGIISFDEFVLAIFNLLNL). 2 disordered regions span residues 102 to 792 (PEKE…CSVE) and 858 to 890 (PYTRGLPLDESPAGAQETPAPQALEDKQGHPQR). A compositionally biased stretch (polar residues) spans 113–128 (QATTGDGQWTVGTSPT). 5 stretches are compositionally biased toward basic and acidic residues: residues 172–185 (ASEHNDPKNKHLEG), 222–240 (TERKGQDKEISQEGDEPAR), 268–300 (ATQRPCEDQEVRTEKEKHSNIQEPPLQREDEPS), 349–371 (NLGEPEDYGRTSETQEKECETKD), and 385–398 (SDMRDERKERRGPE). Residues 443–452 (ETQYLSSEGG) show a composition bias toward polar residues. The segment covering 524 to 536 (VEEEDGYQGEDPE) has biased composition (acidic residues). Residues 538-554 (PFTQSDEGSSETPNSLA) show a composition bias toward polar residues. A compositionally biased stretch (low complexity) spans 555-578 (SEEGNSSSETGELPVQGDSQSQGD). Residues 586–598 (GGHNNNPDTQRQG) show a composition bias toward polar residues. Residues 759 to 770 (GDQKSPAKKEHN) are compositionally biased toward basic and acidic residues. Polar residues predominate over residues 771-780 (SSVPWSSLEK). The segment covering 881–890 (LEDKQGHPQR) has biased composition (basic and acidic residues).

Belongs to the S-100 family.

This is Trichohyalin-like protein 1 (TCHHL1) from Homo sapiens (Human).